Here is a 498-residue protein sequence, read N- to C-terminus: Protein adenylyltransferase Fic (498 aa).

A helical membrane pass occupies residues 43–63 (FAFLAFLAGSFLAFSLHALIS). TPR repeat units follow at residues 126–159 (ALSSLRLAQDMYMAGKDDKAARLFEHALALAPRH) and 160–194 (PEVLLRYGEFLEHNQRNIVLADQYYFQALTINPSH). Residues 251-256 (SVGIEG) carry the Inhibitory (S/T)XXXE(G/N) motif motif. ATP contacts are provided by residues Glu255 and 336–339 (VGGH). Residues 305-440 (ITIKDILELH…IRPFVRFIAD (136 aa)) enclose the Fido domain. His383 is an active-site residue. ATP is bound by residues 387-394 (DGNGRTSR), 419-420 (YY), and Asn427.

This sequence belongs to the fic family. In terms of assembly, homodimer.

It localises to the membrane. It catalyses the reaction L-tyrosyl-[protein] + ATP = O-(5'-adenylyl)-L-tyrosyl-[protein] + diphosphate. The enzyme catalyses L-threonyl-[protein] + ATP = 3-O-(5'-adenylyl)-L-threonyl-[protein] + diphosphate. It carries out the reaction 3-O-(5'-adenylyl)-L-threonyl-[protein] + H2O = L-threonyl-[protein] + AMP + H(+). The side chain of Glu-255 determines which of the two opposing activities (AMPylase or de-AMPylase) will take place. In response to endoplasmic reticulum stress, mediates de-AMPylase activity. Adenylyltransferase activity is inhibited by the inhibitory helix present at the N-terminus: Glu-255 binds ATP and competes with ATP-binding at Arg-394, thereby preventing adenylyltransferase activity. In unstressed cells, disengagement of Glu-255 promotes adenylyltransferase activity. Activation dissociates ATP-binding from Glu-255, allowing ordered binding of the entire ATP moiety with the alpha-phosphate in an orientation that is productive for accepting an incoming target hydroxyl side chain. Its function is as follows. Protein that can both mediate the addition of adenosine 5'-monophosphate (AMP) to specific residues of target proteins (AMPylation), and the removal of the same modification from target proteins (de-AMPylation), depending on the context. The side chain of Glu-255 determines which of the two opposing activities (AMPylase or de-AMPylase) will take place. Acts as a key regulator of the unfolded protein response (UPR) by mediating AMPylation or de-AMPylation of Hsc70-3/BiP. In unstressed cells, acts as an adenylyltransferase by mediating AMPylation of Hsc70-3/BiP at 'Thr-518', thereby inactivating it. In response to endoplasmic reticulum stress, acts as a phosphodiesterase by mediating removal of ATP (de-AMPylation) from Hsc70-3/BiP at 'Thr-518', leading to restore HSPA5/BiP activity. This is Protein adenylyltransferase Fic from Drosophila willistoni (Fruit fly).